The chain runs to 473 residues: Glycogen synthase (473 aa).

K15 serves as a coordination point for ADP-alpha-D-glucose.

It belongs to the glycosyltransferase 1 family. Bacterial/plant glycogen synthase subfamily.

The enzyme catalyses [(1-&gt;4)-alpha-D-glucosyl](n) + ADP-alpha-D-glucose = [(1-&gt;4)-alpha-D-glucosyl](n+1) + ADP + H(+). It functions in the pathway glycan biosynthesis; glycogen biosynthesis. Synthesizes alpha-1,4-glucan chains using ADP-glucose. The protein is Glycogen synthase of Flavobacterium johnsoniae (strain ATCC 17061 / DSM 2064 / JCM 8514 / BCRC 14874 / CCUG 350202 / NBRC 14942 / NCIMB 11054 / UW101) (Cytophaga johnsonae).